A 235-amino-acid chain; its full sequence is Ribonuclease 3 (235 aa).

In terms of domain architecture, RNase III spans 6–131 (IDQLERLTEH…LIAVMYLDGG (126 aa)). Residue Glu-44 coordinates Mg(2+). Residue Asp-48 is part of the active site. Mg(2+)-binding residues include Asp-117 and Glu-120. Glu-120 is an active-site residue. The DRBM domain maps to 156 to 225 (DAKTELQEWA…AEKVLRREGI (70 aa)).

Belongs to the ribonuclease III family. Homodimer. Requires Mg(2+) as cofactor.

It is found in the cytoplasm. It catalyses the reaction Endonucleolytic cleavage to 5'-phosphomonoester.. Digests double-stranded RNA. Involved in the processing of primary rRNA transcript to yield the immediate precursors to the large and small rRNAs (23S and 16S). Processes some mRNAs, and tRNAs when they are encoded in the rRNA operon. Processes pre-crRNA and tracrRNA of type II CRISPR loci if present in the organism. This is Ribonuclease 3 from Bartonella quintana (strain Toulouse) (Rochalimaea quintana).